The following is a 610-amino-acid chain: MIQVLLVTICLAAFPYQGSSIILESGNVNDYEVVYPRKVTALPKGAVQPKYEDAMQYEFKVNGEPVVLHLGKNKQLFSKDYSETHYSPDGREITTNPPVEDHCYYHGRIENDADSTRSISACNGLKGHFKLQGETYLIEPLKLSDSEAHAVYKYENILKEDEAPKMCGVTQNWESYEPIKKASQLNLTPEQQRYNPFRFVELVLVADKGMVTKNNGDLNKIKTRMYELANNLNDIYRYMYIHVALVGVEIWSDGDKITVTPNVDDTLSSFAEWRKTHLLTRKKHDNAQLLTAIDFNGPTIGYAYIASMCHPKRSVGIVQDYSPINLVLSVVMAHEMGHNLGIHHDHSYCSCGDYACIMGATISHEPSTFFSNCSYIQCWDFIMDHNPECIVNEPLGTDIVSPPVCGNELLEVGEECDCGTPENCQNECCDAATCKLKSGSQCGHGDCCEQCKFSKSGTECRESMSECDPAEHCTGQSSECPADVFHKNGQPCLHNYGYCYNGNCPIMYHQCYALWGADVYEAEDSCFESNKKGNYYGYCRKENGKKIPCAPEDVKCGRLYCKDNSPGQNNPCKMFYSNEDEHKGMVLPGTKCGDGKVCSNGHCVDVATAY.

The N-terminal stretch at 1–20 (MIQVLLVTICLAAFPYQGSS) is a signal peptide. The propeptide occupies 21 to 191 (IILESGNVND…ASQLNLTPEQ (171 aa)). At Gln-192 the chain carries Pyrrolidone carboxylic acid. Positions 198–394 (RFVELVLVAD…HNPECIVNEP (197 aa)) constitute a Peptidase M12B domain. Residues Glu-201 and Asp-285 each contribute to the Ca(2+) site. Cystine bridges form between Cys-309–Cys-389, Cys-349–Cys-373, Cys-351–Cys-356, and Cys-373–Cys-378. Residue His-334 coordinates Zn(2+). Residue Glu-335 is part of the active site. The Zn(2+) site is built by His-338 and His-344. An N-linked (GlcNAc...) asparagine glycan is attached at Asn-372. Residues Cys-389, Asn-392, Val-404, Asn-407, Leu-409, Glu-411, Glu-414, and Asp-417 each coordinate Ca(2+). In terms of domain architecture, Disintegrin spans 402–488 (PPVCGNELLE…ECPADVFHKN (87 aa)). Intrachain disulfides connect Cys-405/Cys-424, Cys-405/Cys-434, Cys-416/Cys-429, Cys-416/Cys-434, Cys-418/Cys-424, Cys-428/Cys-451, Cys-442/Cys-448, Cys-447/Cys-473, Cys-460/Cys-480, Cys-467/Cys-492, Cys-467/Cys-499, Cys-492/Cys-504, Cys-499/Cys-504, Cys-511/Cys-526, Cys-511/Cys-561, Cys-526/Cys-572, Cys-539/Cys-549, Cys-549/Cys-556, Cys-556/Cys-598, Cys-561/Cys-572, Cys-592/Cys-603, and Cys-598/Cys-603. The D/ECD-tripeptide signature appears at 466–468 (ECD). The Ca(2+) site is built by Asp-468, Pro-469, Glu-471, Asp-483, and Val-484.

Belongs to the venom metalloproteinase (M12B) family. P-III subfamily. P-IIIb sub-subfamily. As to quaternary structure, monomer. It depends on Zn(2+) as a cofactor. Post-translationally, in the absence of calcium ions, is autocatalytically degraded giving 29 (p29K) and 45 kDa (p45K) fragments. In presence of calcium ions, the p45K is not detected. Expressed by the venom gland.

It localises to the secreted. Inhibited by chelating agents. Calcium ions enhance its activity, they also suppress autoproteolysis, and contribute to the stability of the enzyme against pH, heating, urea and cysteine. In terms of biological role, shows weak hemorrhagic activity. Rapidly degrades the alpha-chain of fibrinogen (FGA). The protein is Zinc metalloproteinase-disintegrin-like brevilysin H6 of Gloydius brevicauda (Korean slamosa snake).